The following is a 55-amino-acid chain: MKNNDKKKEVQRKYREEIKKKKQKNEDNKNFIKETIIVVTIIVLFIFFTYTLQGF.

The disordered stretch occupies residues 1-25; that stretch reads MKNNDKKKEVQRKYREEIKKKKQKN. A helical membrane pass occupies residues 35-55; sequence TIIVVTIIVLFIFFTYTLQGF.

The protein resides in the membrane. This is an uncharacterized protein from Bacillus subtilis (strain 168).